The sequence spans 351 residues: MGFWSNLKDKLFGTKEERIAKKQAKIEAKEQRQLEKELIKKNKLNTYIAGLSKSNSSFNEHIKELQNKHNKIDEEFFEDLEEMLIMSDISIKLVQIIINECKKEVRNENITDPKLINEIIADKLFTIYTSNSVVDTTLNIKDNRLNVILVVGVNGSGKTTSISKIAKKLIDEGKKVLIAAGDTFRAAAVEQLEIWAKRVGADIVTPNENEVDPAAVVYRAIDIAKSKKYDILIVDTAGRLQNKVNLMNELAKINRVLASKIPDAPHESLLVLDATTGQNGVIQARVFKESTPLTGIILTKMDGTSKGGIVLTIKDEIGLFVKYIGLGEKVDDLAEFDLDSYIYGLTKGINE.

GTP-binding positions include 152–159 (GVNGSGKT), 235–239 (DTAGR), and 299–302 (TKMD).

Belongs to the GTP-binding SRP family. FtsY subfamily. In terms of assembly, part of the signal recognition particle protein translocation system, which is composed of SRP and FtsY.

It is found in the cell membrane. The protein localises to the cytoplasm. It catalyses the reaction GTP + H2O = GDP + phosphate + H(+). Involved in targeting and insertion of nascent membrane proteins into the cytoplasmic membrane. Acts as a receptor for the complex formed by the signal recognition particle (SRP) and the ribosome-nascent chain (RNC). In Metamycoplasma hominis (strain ATCC 23114 / DSM 25592 / NBRC 14850 / NCTC 10111 / PG21) (Mycoplasma hominis), this protein is Signal recognition particle receptor FtsY.